The chain runs to 193 residues: MKLLHLDSSALGANSISRELSAAVVEQQRRLHPEVDVSYRDLDRDPIPHLTAQTLAQTDPAEAAAAEAVMQQFLQADVIVIGAPMYNFAIPSTLKAWIDRIAVAGRTFQYTANGPEGLAGGKRVIIASARGGLYADPTNDFQEPYLRQVLGFLGVDDISFVRAEGVAYSPQHRADALASALAGLSEEEAAAGA.

FMN-binding positions include S9, 15-17, and 85-88; these read SIS and MYNF.

It belongs to the azoreductase type 1 family. As to quaternary structure, homodimer. It depends on FMN as a cofactor.

It catalyses the reaction 2 a quinone + NADH + H(+) = 2 a 1,4-benzosemiquinone + NAD(+). The enzyme catalyses N,N-dimethyl-1,4-phenylenediamine + anthranilate + 2 NAD(+) = 2-(4-dimethylaminophenyl)diazenylbenzoate + 2 NADH + 2 H(+). Quinone reductase that provides resistance to thiol-specific stress caused by electrophilic quinones. Functionally, also exhibits azoreductase activity. Catalyzes the reductive cleavage of the azo bond in aromatic azo compounds to the corresponding amines. The sequence is that of FMN-dependent NADH:quinone oxidoreductase 1 from Xanthomonas axonopodis pv. citri (strain 306).